The primary structure comprises 1668 residues: MSKIRRKVTVENTKTISDSTSRRPSVFERLGPSTGSTAETQCRNWLKTGNCLYGNTCRFVHGPSPRGKGYSSNYRRSPERPTGDLRERMKNKRQDVDTEPQKRNTEESSSPVRKESSRGRHREKEDIKITKERTPESEEENVEWETNRDDSDNGDINYDYVHELSLEMKRQKIQRELMKLEQENMEKREEIIIKKEVSPEVVRSKLSPSPSLRKSSKSPKRKSSPKSSSASKKDRKTSAVSSPLLDQQRNSKTNQSKKKGPRTPSPPPPIPEDIALGKKYKEKYKVKDRIEEKTRDGKDRGRDFERQREKRDKPRSTSPAGQHHSPISSRHHSSSSQSGSSIQRHSPSPRRKRTPSPSYQRTLTPPLRRSASPYPSHSLSSPQRKQSPPRHRSPMREKGRHDHERTSQSHDRRHERREDTRGKRDREKDSREEREYEQDQSSSRDHRDDREPRDGRDRRDARDTRDRRELRDSRDMRDSREMRDYSRDTKESRDPRDSRSTRDAHDYRDREGRDTHRKEDTYPEESRSYGRNHLREESSRTEIRNESRNESRSEIRNDRMGRSRGRVPELPEKGSRGSRGSQIDSHSSNSNYHDSWETRSSYPERDRYPERDNRDQARDSSFERRHGERDRRDNRERDQRPSSPIRHQGRNDELERDERREERRVDRVDDRRDERARERDRERERDRERERERERERDREREKERELERERAREREREREKERDRERDRDRDHDRERERERERDREKEREREREERERERERERERERERERERERARERDKERERQRDWEDKDKGRDDRREKREEIREDRNPRDGHDERKSKKRYRNEGSPSPRQSPKRRREHSPDSDAYNSGDDKNEKHRLLSQVVRPQESRSLSPSHLTEDRQGRWKEEDRKPERKESSRRYEEQELKEKVSSVDKQREQTEILESSRMRAQDIIGHHQSEDRETSDRAHDENKKKAKIQKKPIKKKKEDDVGIERGNIETTSEDGQVFSPKKGQKKKSIEKKRKKSKGDSDISDEEAAQQSKKKRGPRTPPITTKEELVEMCNGKNGILEDSQKKEDTAFSDWSDEDVPDRTEVTEAEHTATATTPGSTPSPLSSLLPPPPPVATATATTVPATLAATTAAAATSFSTSAITISTSATPTNTTNNTFANEDSHRKCHRTRVEKVETPHVTIEDAQHRKPMDQKRSSSLGSNRSNRSHTSGRLRSPSNDSAHRSGDDQSGRKRVLHSGSRDREKTKSLEITGERKSRIDQLKRGEPSRSTSSDRQDSRSHSSRRSSPESDRQVHSRSGSFDSRDRLQERDRYEHDRERERERRDTRQREWDRDADKDWPRNRDRDRLRERERERERDKRRDLDRERERLISDSVERDRDRDRDRTFESSQIESVKRCEAKLEGEHERDLESTSRDSLALDKERMDKDLGSVQGFEETNKSERTESLEGDDESKLDDAHSLGSGAGEGYEPISDDELDEILAGDAEKREDQQDEEKMPDPLDVIDVDWSGLMPKHPKEPREPGAALLKFTPGAVMLRVGISKKLAGSELFAKVKETCQRLLEKPKDADNLFEHELGALNMAALLRKEERASLLSNLGPCCKALCFRRDSAIRKQLVKNEKGTIKQAYTSAPMVDNELLRLSLRLFKRKTTCHAPGHEKTEDNKLSQSSIQQELCVS.

Disordered regions lie at residues methionine 1–alanine 38 and threonine 56–asparagine 157. The segment covering valine 10 to arginine 23 has biased composition (polar residues). The C3H1-type zinc-finger motif lies at serine 36–serine 64. Phosphoserine is present on residues serine 64 and serine 77. Basic and acidic residues predominate over residues arginine 76 to glutamate 136. Glycyl lysine isopeptide (Lys-Gly) (interchain with G-Cter in SUMO2) cross-links involve residues lysine 179 and lysine 194. Disordered regions lie at residues glutamate 190 to alanine 1112 and alanine 1125 to aspartate 1466. Phosphoserine is present on residues serine 198, serine 207, serine 209, and serine 211. Positions serine 204–arginine 213 are enriched in low complexity. Basic residues predominate over residues lysine 214 to serine 224. Position 237 is a phosphothreonine (threonine 237). Residues serine 238 and serine 242 each carry the phosphoserine modification. Over residues alanine 239–asparagine 254 the composition is skewed to polar residues. A Phosphothreonine modification is found at threonine 263. At serine 265 the chain carries Phosphoserine. Basic and acidic residues predominate over residues lysine 283–arginine 315. 4 positions are modified to phosphoserine: serine 316, serine 318, serine 325, and serine 328. Residues histidine 323 to serine 346 are compositionally biased toward low complexity. 2 positions are modified to phosphothreonine: threonine 354 and threonine 364. 3 positions are modified to phosphoserine: serine 370, serine 372, and serine 381. Residues serine 370–proline 382 are compositionally biased toward low complexity. 2 stretches are compositionally biased toward basic and acidic residues: residues proline 394 to arginine 434 and serine 442 to serine 575. The span at aspartate 584–histidine 593 shows a compositional bias: low complexity. The segment covering aspartate 594 to arginine 640 has biased composition (basic and acidic residues). Residue serine 643 is modified to Phosphoserine. Residues isoleucine 645–aspartate 789 adopt a coiled-coil conformation. The span at glycine 649–lysine 821 shows a compositional bias: basic and acidic residues. Phosphoserine occurs at positions 831, 833, 837, 845, 848, 853, 873, 875, and 877. A compositionally biased stretch (basic and acidic residues) spans leucine 881–lysine 957. A Phosphothreonine modification is found at threonine 882. Serine 943 is modified (phosphoserine). Residues lysine 958–lysine 969 are compositionally biased toward basic residues. The segment covering lysine 970–asparagine 981 has biased composition (basic and acidic residues). Phosphoserine occurs at positions 986, 993, 1010, 1014, and 1017. A compositionally biased stretch (basic residues) spans lysine 996 to serine 1010. Threonine 1033 is modified (phosphothreonine). Residues proline 1073–histidine 1083 are compositionally biased toward basic and acidic residues. Low complexity-rich tracts occupy residues threonine 1084 to leucine 1100 and alanine 1125 to asparagine 1153. Residues threonine 1163–arginine 1188 show a composition bias toward basic and acidic residues. Threonine 1170 bears the Phosphothreonine mark. Phosphoserine occurs at positions 1191, 1194, 1208, and 1210. Residues serine 1213–glycine 1223 show a composition bias toward basic and acidic residues. Phosphoserine is present on serine 1230. Basic and acidic residues-rich tracts occupy residues glycine 1231–valine 1286 and aspartate 1294–phenylalanine 1379. Residues glutamine 1300–serine 1366 are a coiled coil. Phosphoserine is present on residues serine 1364, serine 1366, serine 1382, serine 1386, serine 1406, serine 1409, serine 1438, leucine 1453, glycine 1456, serine 1465, and aspartate 1466. Composition is skewed to basic and acidic residues over residues serine 1386 to leucine 1421 and glutamate 1429 to serine 1438.

Belongs to the ZC3H13 family. Component of the WMM complex, a N6-methyltransferase complex composed of a catalytic subcomplex, named MAC, and of an associated subcomplex, named MACOM. The MAC subcomplex is composed of METTL3 and METTL14. The MACOM subcomplex is composed of WTAP, ZC3H13, CBLL1/HAKAI, VIRMA, and, in some cases of RBM15 (RBM15 or RBM15B). Also a component of a MACOM-like complex, named WTAP complex, composed of WTAP, ZC3H13, CBLL1/HAKAI, VIRMA, RBM15, BCLAF1 and THRAP3.

Its subcellular location is the nucleus speckle. It is found in the nucleus. The protein resides in the nucleoplasm. Associated component of the WMM complex, a complex that mediates N6-methyladenosine (m6A) methylation of RNAs, a modification that plays a role in the efficiency of mRNA splicing and RNA processing. Acts as a key regulator of m6A methylation by promoting m6A methylation of mRNAs at the 3'-UTR. Controls embryonic stem cells (ESCs) pluripotency via its role in m6A methylation. In the WMM complex, anchors component of the MACOM subcomplex in the nucleus. Also required for bridging WTAP to the RNA-binding component RBM15 (RBM15 or RBM15B). This chain is Zinc finger CCCH domain-containing protein 13, found in Homo sapiens (Human).